We begin with the raw amino-acid sequence, 502 residues long: ATP synthase subunit alpha, chloroplastic (502 aa).

170–177 (GDRQTGKT) provides a ligand contact to ATP.

This sequence belongs to the ATPase alpha/beta chains family. F-type ATPases have 2 components, CF(1) - the catalytic core - and CF(0) - the membrane proton channel. CF(1) has five subunits: alpha(3), beta(3), gamma(1), delta(1), epsilon(1). CF(0) has four main subunits: a, b, b' and c.

The protein resides in the plastid. The protein localises to the chloroplast thylakoid membrane. It catalyses the reaction ATP + H2O + 4 H(+)(in) = ADP + phosphate + 5 H(+)(out). Its function is as follows. Produces ATP from ADP in the presence of a proton gradient across the membrane. The alpha chain is a regulatory subunit. The polypeptide is ATP synthase subunit alpha, chloroplastic (Rhodomonas salina (Cryptomonas salina)).